We begin with the raw amino-acid sequence, 692 residues long: Proprotein convertase subtilisin/kexin type 9 (692 aa).

The signal sequence occupies residues 1–30; sequence MGTVSSRRSWWPLPLPLLLLLLLGPAGARA. Residues 31 to 152 constitute a propeptide that is removed on maturation; that stretch reads QEDEDGDYEE…IEEDSSVFAQ (122 aa). At Y38 the chain carries Sulfotyrosine. At S47 the chain carries Phosphoserine. An Inhibitor I9 domain is found at 77–149; that stretch reads TYVVVLKEET…VDYIEEDSSV (73 aa). Residues 155–444 form the Peptidase S8 domain; sequence PWNLERITPA…VLTPNLVAAL (290 aa). Residues D186 and H226 each act as charge relay system in the active site. Cystine bridges form between C223/C255 and C323/C358. S386 (charge relay system) is an active-site residue. A C-terminal domain region spans residues 450-692; the sequence is RAGWQLFCRT…HLVQASQELQ (243 aa). Cystine bridges form between C457–C527, C477–C526, and C486–C509. An N-linked (GlcNAc...) asparagine glycan is attached at N533. 6 disulfide bridges follow: C534–C601, C552–C600, C562–C588, C608–C679, C626–C678, and C635–C654. Position 688 is a phosphoserine (S688).

The protein belongs to the peptidase S8 family. As to quaternary structure, monomer. Can self-associate to form dimers and higher multimers which may have increased LDLR degrading activity. The precursor protein but not the mature protein may form multimers. Interacts with APOB, VLDLR, LRP8/APOER2 and BACE1. The full-length immature form (pro-PCSK9) interacts with SCNN1A, SCNN1B and SCNN1G. The pro-PCSK9 form (via C-terminal domain) interacts with LDLR. Interacts (via the C-terminal domain) with ANXA2 (via repeat Annexin 1); the interaction inhibits the degradation of LDLR. The cofactor is Ca(2+). Post-translationally, cleavage by furin and PCSK5 generates a truncated inactive protein that is unable to induce LDLR degradation. Undergoes autocatalytic cleavage in the endoplasmic reticulum to release the propeptide from the N-terminus and the cleavage of the propeptide is strictly required for its maturation and activation. The cleaved propeptide however remains associated with the catalytic domain through non-covalent interactions, preventing potential substrates from accessing its active site. As a result, it is secreted from cells as a propeptide-containing, enzymatically inactive protein. In terms of processing, phosphorylation protects the propeptide against proteolysis.

The protein resides in the cytoplasm. The protein localises to the secreted. It localises to the endosome. Its subcellular location is the lysosome. It is found in the cell surface. The protein resides in the endoplasmic reticulum. The protein localises to the golgi apparatus. With respect to regulation, its proteolytic activity is autoinhibited by the non-covalent binding of the propeptide to the catalytic domain. Inhibited by EGTA. Its function is as follows. Crucial player in the regulation of plasma cholesterol homeostasis. Binds to low-density lipid receptor family members: low density lipoprotein receptor (LDLR), very low density lipoprotein receptor (VLDLR), apolipoprotein E receptor (LRP1/APOER) and apolipoprotein receptor 2 (LRP8/APOER2), and promotes their degradation in intracellular acidic compartments. Acts via a non-proteolytic mechanism to enhance the degradation of the hepatic LDLR through a clathrin LDLRAP1/ARH-mediated pathway. May prevent the recycling of LDLR from endosomes to the cell surface or direct it to lysosomes for degradation. Can induce ubiquitination of LDLR leading to its subsequent degradation. Inhibits intracellular degradation of APOB via the autophagosome/lysosome pathway in a LDLR-independent manner. Involved in the disposal of non-acetylated intermediates of BACE1 in the early secretory pathway. Inhibits epithelial Na(+) channel (ENaC)-mediated Na(+) absorption by reducing ENaC surface expression primarily by increasing its proteasomal degradation. Regulates neuronal apoptosis via modulation of LRP8/APOER2 levels and related anti-apoptotic signaling pathways. In Macaca mulatta (Rhesus macaque), this protein is Proprotein convertase subtilisin/kexin type 9 (PCSK9).